The primary structure comprises 115 residues: Large ribosomal subunit protein uL24 (115 aa).

Residues 49 to 68 form a disordered region; it reads NMKTKHHPPSKDQEKGSITK.

The protein belongs to the universal ribosomal protein uL24 family. As to quaternary structure, part of the 50S ribosomal subunit.

Functionally, one of two assembly initiator proteins, it binds directly to the 5'-end of the 23S rRNA, where it nucleates assembly of the 50S subunit. One of the proteins that surrounds the polypeptide exit tunnel on the outside of the subunit. The polypeptide is Large ribosomal subunit protein uL24 (Phytoplasma australiense).